Reading from the N-terminus, the 379-residue chain is MKILRKNHPLLKIINHSFIDLPTPSNISSWWNFGSLLGMCLMIQILTGLFLAMHYTSDTTTAFSSVAHICRDVNYGWLIRYLHANGASMFFICLFIHVGRGIYYGSYALSETWNIGIILFLMTMATAFVGYVLPWGQMSFWGATVITNLLSAIPYIGSTLVEWIWGGFSVDKATLTRFFAFHFILPFIIAAFALVHLLFLHETGSNNPSGLNSDSDKIPFHPYYTTKDLLGIFLLLLVLMILALFFPDVLGDPDNFTPANPLNTPAHIKPEWYFLFAYAILRSIPNKLGGVLALILSILILAAFPLLNNSKQHGLIFRPVTQVIYWIFTANLLVLTWIGGQPVEYPFTMIGQIASITYLAIIIILMPISNTIENNIIKL.

4 helical membrane-spanning segments follow: residues 33–53, 77–98, 113–133, and 178–198; these read FGSLLGMCLMIQILTGLFLAM, WLIRYLHANGASMFFICLFIHV, WNIGIILFLMTMATAFVGYVL, and FFAFHFILPFIIAAFALVHLL. Heme b is bound by residues histidine 83 and histidine 97. Heme b contacts are provided by histidine 182 and histidine 196. A ubiquinone is bound at residue histidine 201. 4 consecutive transmembrane segments (helical) span residues 226–246, 288–308, 320–340, and 347–367; these read TKDLLGIFLLLLVLMILALFF, LGGVLALILSILILAAFPLLN, VTQVIYWIFTANLLVLTWIGG, and FTMIGQIASITYLAIIIILMP.

It belongs to the cytochrome b family. In terms of assembly, the cytochrome bc1 complex contains 11 subunits: 3 respiratory subunits (MT-CYB, CYC1 and UQCRFS1), 2 core proteins (UQCRC1 and UQCRC2) and 6 low-molecular weight proteins (UQCRH/QCR6, UQCRB/QCR7, UQCRQ/QCR8, UQCR10/QCR9, UQCR11/QCR10 and a cleavage product of UQCRFS1). This cytochrome bc1 complex then forms a dimer. Heme b serves as cofactor.

The protein resides in the mitochondrion inner membrane. Functionally, component of the ubiquinol-cytochrome c reductase complex (complex III or cytochrome b-c1 complex) that is part of the mitochondrial respiratory chain. The b-c1 complex mediates electron transfer from ubiquinol to cytochrome c. Contributes to the generation of a proton gradient across the mitochondrial membrane that is then used for ATP synthesis. The protein is Cytochrome b (MT-CYB) of Akodon kofordi (Koford's grass mouse).